A 45-amino-acid polypeptide reads, in one-letter code: Putative potassium channel blocker (45 aa).

Expressed by the venom gland.

It is found in the secreted. In terms of biological role, inhibits potassium channels. This chain is Putative potassium channel blocker, found in Hottentotta tamulus (Eastern Indian scorpion).